The primary structure comprises 65 residues: Large ribosomal subunit protein bL35 (65 aa).

Residues 1 to 15 are compositionally biased toward basic residues; the sequence is MPKMKTKKSASKRFT. Positions 1 to 27 are disordered; sequence MPKMKTKKSASKRFTARPNGSFKRGQA.

It belongs to the bacterial ribosomal protein bL35 family.

This Cupriavidus pinatubonensis (strain JMP 134 / LMG 1197) (Cupriavidus necator (strain JMP 134)) protein is Large ribosomal subunit protein bL35.